A 193-amino-acid polypeptide reads, in one-letter code: Ion-translocating oxidoreductase complex subunit A (193 aa).

Transmembrane regions (helical) follow at residues 5–25 (LLLF…FLGL), 39–59 (MGMG…AWLI), 63–83 (ILIP…VIAV), 102–122 (LLGI…VALL), 134–154 (ALYG…FAAI), and 171–191 (AIAL…NGLV).

The protein belongs to the NqrDE/RnfAE family. The complex is composed of six subunits: RsxA, RsxB, RsxC, RsxD, RsxE and RsxG.

It localises to the cell inner membrane. In terms of biological role, part of a membrane-bound complex that couples electron transfer with translocation of ions across the membrane. Required to maintain the reduced state of SoxR. In Shigella sonnei (strain Ss046), this protein is Ion-translocating oxidoreductase complex subunit A.